The chain runs to 421 residues: Actin-related protein 6 (421 aa).

Belongs to the actin family. ARP6 subfamily. Component of the SWR1 chromatin-remodeling complex composed of at least ARP6/ESD1/SUF3, PIE1, SWC6, SWC2 and H2AZs (HTA8, HTA9, HTA11). Interacts directly with SWC6/SEF and PIE1. Also interacts with H2A.F/Z proteins. Mostly expressed in flowers, and, to a lower extent, in seedlings, shoot apex, stems, siliques, seeds, and roots (at protein level).

It localises to the nucleus. It is found in the cytoplasm. Component of the SWR1 complex which mediates the ATP-dependent exchange of histone H2A for the H2A variant H2A.F/Z leading to transcriptional regulation of selected genes (e.g. FLC) by chromatin remodeling. Binds to the promoter region of FLC chromatin. Required for the activation of FLC and FLC/MAF genes expression to levels that inhibit flowering, through both histone H3 and H4 acetylation and methylation mechanisms. Involved in several developmental processes including organization of plant organs, leaves formation, flowering time repression, and fertility. Modulates photoperiod-dependent epidermal leaves cell development; promotes cell division in long days, and cell expansion/division in short days. May be involved in the regulation of pathogenesis-related proteins (PRs). The chain is Actin-related protein 6 (ARP6) from Arabidopsis thaliana (Mouse-ear cress).